The primary structure comprises 242 residues: Ribonuclease PH (242 aa).

Phosphate is bound by residues Arg-86 and 124–126 (GTR).

The protein belongs to the RNase PH family. Homohexameric ring arranged as a trimer of dimers.

It catalyses the reaction tRNA(n+1) + phosphate = tRNA(n) + a ribonucleoside 5'-diphosphate. Phosphorolytic 3'-5' exoribonuclease that plays an important role in tRNA 3'-end maturation. Removes nucleotide residues following the 3'-CCA terminus of tRNAs; can also add nucleotides to the ends of RNA molecules by using nucleoside diphosphates as substrates, but this may not be physiologically important. Probably plays a role in initiation of 16S rRNA degradation (leading to ribosome degradation) during starvation. The chain is Ribonuclease PH from Bacillus pumilus (strain SAFR-032).